Reading from the N-terminus, the 1342-residue chain is DNA-directed RNA polymerase subunit beta (1342 aa).

It belongs to the RNA polymerase beta chain family. As to quaternary structure, the RNAP catalytic core consists of 2 alpha, 1 beta, 1 beta' and 1 omega subunit. When a sigma factor is associated with the core the holoenzyme is formed, which can initiate transcription.

It catalyses the reaction RNA(n) + a ribonucleoside 5'-triphosphate = RNA(n+1) + diphosphate. Its function is as follows. DNA-dependent RNA polymerase catalyzes the transcription of DNA into RNA using the four ribonucleoside triphosphates as substrates. The sequence is that of DNA-directed RNA polymerase subunit beta from Aliivibrio fischeri (strain MJ11) (Vibrio fischeri).